The primary structure comprises 218 residues: ATP-dependent dethiobiotin synthetase BioD (218 aa).

Residue 10–15 coordinates ATP; the sequence is NAGKTT. T14 contacts Mg(2+). K35 is a catalytic residue. T39 is a binding site for substrate. E116 contributes to the Mg(2+) binding site. ATP is bound by residues 116-119 and 176-177; these read EGAG and LR.

The protein belongs to the dethiobiotin synthetase family. Homodimer. The cofactor is Mg(2+).

It localises to the cytoplasm. It catalyses the reaction (7R,8S)-7,8-diammoniononanoate + CO2 + ATP = (4R,5S)-dethiobiotin + ADP + phosphate + 3 H(+). The protein operates within cofactor biosynthesis; biotin biosynthesis; biotin from 7,8-diaminononanoate: step 1/2. In terms of biological role, catalyzes a mechanistically unusual reaction, the ATP-dependent insertion of CO2 between the N7 and N8 nitrogen atoms of 7,8-diaminopelargonic acid (DAPA, also called 7,8-diammoniononanoate) to form a ureido ring. The sequence is that of ATP-dependent dethiobiotin synthetase BioD from Helicobacter pylori (strain J99 / ATCC 700824) (Campylobacter pylori J99).